The sequence spans 236 residues: tRNA (guanine-N(7)-)-methyltransferase (236 aa).

Residues Asp35, Glu60, Asn87, and Asp113 each contribute to the S-adenosyl-L-methionine site. Residue Asp113 is part of the active site. Residues Lys117 and Asp149 each contribute to the substrate site.

Belongs to the class I-like SAM-binding methyltransferase superfamily. TrmB family.

The catalysed reaction is guanosine(46) in tRNA + S-adenosyl-L-methionine = N(7)-methylguanosine(46) in tRNA + S-adenosyl-L-homocysteine. Its pathway is tRNA modification; N(7)-methylguanine-tRNA biosynthesis. In terms of biological role, catalyzes the formation of N(7)-methylguanine at position 46 (m7G46) in tRNA. The sequence is that of tRNA (guanine-N(7)-)-methyltransferase from Prochlorococcus marinus (strain MIT 9303).